Consider the following 1167-residue polypeptide: METDNLLKYLISQNTEQRIEQIENWQTLMQQSGYTSDYLTATAGTLRTKREIQHCKDVLSDISMKRWNTSLTQGRYSSDQLFFGLNECSGTNKALVDRMKINFNFHKLNFHGFAKYWILNGDFDKMCCYDSDRTKLFLTKKGNHITIDLNGITSSCNITNVFGHLTVDDKFEPNFDILIRIVQKDEYVVCQFINFTFNPKIKFFKQQPFTIEFIGNTLYFCVNSQLIFDVLDGYKGKDDLSLRDYYLCRIAYVNLLKLEHALEQKQKLDLGDENENLAKYVHQLALNALTGVSKLSEETIRTKTLSMELGYKKNIDIGIASQKILINQFTHDLFNNKFVTDFIGWNYTYGECDIEIAPIVCNLLTYLDNESSLLNSGPLSYTLLDEFGGHDRMFILQVKDESGNDYRMLCELQFSLKYKKFSYQGLKVFNADNLEYADCYLFGFGQNQVYGEKQTLNVNSIVSDKQGNLVYHVHALSSLVCRFKVISERIEYLGNALPTFNATLTFNKDLIKMSGNLRLVEDFDGSKKTKYLLSDEFTLENTILVSINFNICEGKQTNSAARYNGKTWPGLRSRDFKNDFYENDFEVVIHNLNYHSQFNEHSNRSDILYSACNCYHFVESDSCFTNRDESYLYWKVNSQTIPMEFDSRPYIKLYNRAFIQIPVLMKGGSNRIIGPKHKCLLNEDYYVNDYQYEITSDSPRVYLPYPNSSQIISIVDSAGKQLSNTLKIESFDVSKFNVLMLPDRFNNSLDVVGELITFKNELELMLRTNNVLYSMLHSLENRIINLERFCEHLNKTYEDKFNKASSIVQFLGDVFIFIGEMSLVQFPVLGIGLIFVGTLLDGMSRILKEDYFDGISEILISSLLLFLGERKMKYSFLEKLGFGKIKTESNLVLNEKVSSVGKRRSYSAYYASDDHKEFDSSLTLRDRLLRQIRSQNPVVFDFHHNSGVMIELKNKQKPSYQALNSSYTRIKRAIGSVGTNNGLERKLNDITSENHYLKSLLITTFDYFTYQVTNSIVIVFKVVFEVKIDGDDRSVEIINKDILYYRNDLEVAFSVFNSCRYDELTDKFPLKFKFEYSDFVNYMYVVCFLSKFGSKDNLLLESYDKFYDSLYLYSSNSDVFSSSINSNNMNRLIYKISHMSAFRTLEQDQDFLTILIRVKDNSSFLRL.

The polypeptide is Putative structural protein VP3 (S3) (Fiji disease virus (isolate Sugarcane) (FDV)).